A 991-amino-acid polypeptide reads, in one-letter code: uncharacterized protein (991 aa).

A signal peptide spans 1-17 (MLWPAALVAMFALAARA). 6 disordered regions span residues 332–352 (DPLP…GETT), 392–425 (TTED…TTEG), 469–511 (EDST…EDTT), 542–569 (DTEA…TTPV), 587–641 (PAPT…NSLS), and 658–734 (ASSG…PPRI). The span at 400 to 413 (TSTPTVTTVIDPTS) shows a compositional bias: low complexity. Residues 414–425 (GAVTTESRTTEG) are compositionally biased toward polar residues. Residues 472 to 493 (TTTARAAEYPTPTTTTVEPRPA) show a composition bias toward low complexity. Residues 542-554 (DTEAAQSATSISD) are compositionally biased toward polar residues. 2 stretches are compositionally biased toward low complexity: residues 556–569 (VTPE…TTPV) and 598–615 (ASTT…SHTP). 2 stretches are compositionally biased toward polar residues: residues 617 to 628 (PQESTSTPSRAP) and 658 to 667 (ASSGPGASTG). A compositionally biased stretch (low complexity) spans 668–682 (ATTAPISPPWSASPA). A compositionally biased stretch (polar residues) spans 686 to 710 (VTTSAARTLEPSSTRKAVAAESTTA).

This is an uncharacterized protein from Psittacid herpesvirus 1 (isolate Amazon parrot/-/97-0001/1997) (PsHV-1).